A 555-amino-acid chain; its full sequence is 2-succinyl-5-enolpyruvyl-6-hydroxy-3-cyclohexene-1-carboxylate synthase (555 aa).

It belongs to the TPP enzyme family. MenD subfamily. Homodimer. It depends on Mg(2+) as a cofactor. The cofactor is Mn(2+). Thiamine diphosphate serves as cofactor.

It carries out the reaction isochorismate + 2-oxoglutarate + H(+) = 5-enolpyruvoyl-6-hydroxy-2-succinyl-cyclohex-3-ene-1-carboxylate + CO2. Its pathway is quinol/quinone metabolism; 1,4-dihydroxy-2-naphthoate biosynthesis; 1,4-dihydroxy-2-naphthoate from chorismate: step 2/7. The protein operates within quinol/quinone metabolism; menaquinone biosynthesis. Catalyzes the thiamine diphosphate-dependent decarboxylation of 2-oxoglutarate and the subsequent addition of the resulting succinic semialdehyde-thiamine pyrophosphate anion to isochorismate to yield 2-succinyl-5-enolpyruvyl-6-hydroxy-3-cyclohexene-1-carboxylate (SEPHCHC). This chain is 2-succinyl-5-enolpyruvyl-6-hydroxy-3-cyclohexene-1-carboxylate synthase, found in Bacteroides fragilis (strain ATCC 25285 / DSM 2151 / CCUG 4856 / JCM 11019 / LMG 10263 / NCTC 9343 / Onslow / VPI 2553 / EN-2).